Reading from the N-terminus, the 180-residue chain is ADP-ribosylation factor-like protein 1 (180 aa).

The N-myristoyl glycine moiety is linked to residue Gly2. GTP is bound by residues 23-30, 66-70, and 125-128; these read GLDGAGKT, DLGGQ, and NKQD.

The protein belongs to the small GTPase superfamily. Arf family. As to expression, expressed in neuronal cells. Expression in hypodermal tissues is absent.

The protein localises to the golgi apparatus. Its subcellular location is the cytoplasm. It is found in the cytoplasmic granule. Its function is as follows. GTP-binding protein that may be involved in protein trafficking; may modulate vesicle budding and uncoating within the Golgi apparatus. Plays a role in male tail tip morphogenesis. In Caenorhabditis elegans, this protein is ADP-ribosylation factor-like protein 1.